Consider the following 337-residue polypeptide: MNKQDFYFDLPSELIAQYPLANRSDSRLLIYNRQTEEYGHYQFREIADFLQPGDLLVMNDSKVIPARLYGHKATGGKVELLVERITGDFTFLAHIKASKSLKSNDLIYLDAGKRLEVLQRQDDLFLCKACENILDLLNDLGHIPLPPYIAREDESLDKERYQTVYAKCAGSVAAPTAGLHFDDAVLSSIRARGVNIAYVTLHVGAGTFRPVRCERIQDHKMHSEWFTVSPDLCTAVKAAKSMGNRVIAVGTTALRSLESAAMGGELIPCSRDTDIFIYPGYQFKVCDGLITNFHLPESTLVMLVSAFIGHQECMALYQEAIDKRYRFFSYGDASLLL.

Belongs to the QueA family. Monomer.

The protein resides in the cytoplasm. It carries out the reaction 7-aminomethyl-7-carbaguanosine(34) in tRNA + S-adenosyl-L-methionine = epoxyqueuosine(34) in tRNA + adenine + L-methionine + 2 H(+). The protein operates within tRNA modification; tRNA-queuosine biosynthesis. In terms of biological role, transfers and isomerizes the ribose moiety from AdoMet to the 7-aminomethyl group of 7-deazaguanine (preQ1-tRNA) to give epoxyqueuosine (oQ-tRNA). The sequence is that of S-adenosylmethionine:tRNA ribosyltransferase-isomerase from Legionella pneumophila subsp. pneumophila (strain Philadelphia 1 / ATCC 33152 / DSM 7513).